Here is a 285-residue protein sequence, read N- to C-terminus: HTH-type transcriptional regulator MurR (285 aa).

Positions 1–77 (MLYLTKIRNA…MALIGEYSAS (77 aa)) constitute an HTH rpiR-type domain. The segment at residues 37 to 56 (SRKMAKQLGISQSSIVKFAQ) is a DNA-binding region (H-T-H motif). The 141-residue stretch at 128 to 268 (IIEVISKAPF…FVGLVQLNDV (141 aa)) folds into the SIS domain.

As to quaternary structure, homotetramer.

It functions in the pathway amino-sugar metabolism; N-acetylmuramate degradation [regulation]. In terms of biological role, represses the expression of the murPQ operon involved in the uptake and degradation of N-acetylmuramic acid (MurNAc). Binds to two adjacent inverted repeats within the operator region. MurNAc 6-phosphate, the substrate of MurQ, is the specific inducer that weakens binding of MurR to the operator. The polypeptide is HTH-type transcriptional regulator MurR (Shigella sonnei (strain Ss046)).